A 123-amino-acid chain; its full sequence is MSSKKIIGAFVLMTGILSGQVYAGVSEHFRNICNQTTADIVAGVQLKKYIADVNTNTRGIYVVSNTGGVWYIPGGRDYPDNFLSGEIRKTAMAAILSDTKVNLCAKTSSSPNHIWAMELDRES.

The signal sequence occupies residues 1 to 19 (MSSKKIIGAFVLMTGILSG). A disulfide bridge connects residues Cys-33 and Cys-104.

Heterohexamer of one A chain and of five B chains.

The biological activity of the toxin is produced by the A chain, which activates intracellular adenyl cyclase. The sequence is that of Heat-labile enterotoxin IIA, B chain from Escherichia coli.